Reading from the N-terminus, the 141-residue chain is Nucleoside diphosphate kinase (141 aa).

ATP-binding residues include lysine 11, phenylalanine 59, arginine 87, threonine 93, arginine 104, and asparagine 114. The Pros-phosphohistidine intermediate role is filled by histidine 117.

The protein belongs to the NDK family. Homotetramer. It depends on Mg(2+) as a cofactor.

The protein resides in the cytoplasm. It catalyses the reaction a 2'-deoxyribonucleoside 5'-diphosphate + ATP = a 2'-deoxyribonucleoside 5'-triphosphate + ADP. It carries out the reaction a ribonucleoside 5'-diphosphate + ATP = a ribonucleoside 5'-triphosphate + ADP. Functionally, major role in the synthesis of nucleoside triphosphates other than ATP. The ATP gamma phosphate is transferred to the NDP beta phosphate via a ping-pong mechanism, using a phosphorylated active-site intermediate. The protein is Nucleoside diphosphate kinase of Xylella fastidiosa (strain 9a5c).